A 102-amino-acid chain; its full sequence is Large ribosomal subunit protein bL21 (102 aa).

Basic residues predominate over residues 77-88 (KPKKHTHTKQGH). Residues 77–102 (KPKKHTHTKQGHRQPYTKVTINKINA) are disordered. Residues 93 to 102 (TKVTINKINA) are compositionally biased toward polar residues.

Belongs to the bacterial ribosomal protein bL21 family. Part of the 50S ribosomal subunit. Contacts protein L20.

In terms of biological role, this protein binds to 23S rRNA in the presence of protein L20. This is Large ribosomal subunit protein bL21 from Limosilactobacillus reuteri (strain DSM 20016) (Lactobacillus reuteri).